A 304-amino-acid chain; its full sequence is UDP-N-acetylenolpyruvoylglucosamine reductase (304 aa).

The FAD-binding PCMH-type domain occupies 28–193 (KTGGPADYLA…LTATFALTPG (166 aa)). Arginine 172 is an active-site residue. The active-site Proton donor is the serine 222. Residue glutamate 292 is part of the active site.

The protein belongs to the MurB family. The cofactor is FAD.

The protein localises to the cytoplasm. It catalyses the reaction UDP-N-acetyl-alpha-D-muramate + NADP(+) = UDP-N-acetyl-3-O-(1-carboxyvinyl)-alpha-D-glucosamine + NADPH + H(+). It functions in the pathway cell wall biogenesis; peptidoglycan biosynthesis. Functionally, cell wall formation. The sequence is that of UDP-N-acetylenolpyruvoylglucosamine reductase from Levilactobacillus brevis (strain ATCC 367 / BCRC 12310 / CIP 105137 / JCM 1170 / LMG 11437 / NCIMB 947 / NCTC 947) (Lactobacillus brevis).